The chain runs to 449 residues: C4-dicarboxylate transport protein (449 aa).

8 helical membrane-spanning segments follow: residues 18–38 (PFYL…ALLG), 61–81 (MIIS…VAHV), 93–113 (VYFL…AHVV), 159–179 (FVGD…IALA), 202–222 (LVQM…AFTI), 244–264 (SLLF…FSIL), 311–331 (GYSF…LFIA), and 369–389 (AATL…ILGV).

The protein belongs to the dicarboxylate/amino acid:cation symporter (DAACS) (TC 2.A.23) family.

It localises to the cell inner membrane. Responsible for the transport of dicarboxylates such as succinate, fumarate, and malate from the periplasm across the membrane. This Xylella fastidiosa (strain M12) protein is C4-dicarboxylate transport protein.